Consider the following 349-residue polypeptide: Heat-inducible transcription repressor HrcA (349 aa).

Belongs to the HrcA family.

Functionally, negative regulator of class I heat shock genes (grpE-dnaK-dnaJ and groELS operons). Prevents heat-shock induction of these operons. This Xylella fastidiosa (strain 9a5c) protein is Heat-inducible transcription repressor HrcA.